The primary structure comprises 80 residues: Omega-conotoxin-like 2/7 (80 aa).

The N-terminal stretch at 1-22 (MKLTCMMIVAVMFLTASIFITA) is a signal peptide. A propeptide spanning residues 23 to 51 (DNSRNGIENLPRMRRHEMKKPKASKLNKR) is cleaved from the precursor. 3 cysteine pairs are disulfide-bonded: Cys53-Cys71, Cys60-Cys75, and Cys70-Cys79.

This sequence belongs to the conotoxin O1 superfamily. As to expression, expressed by the venom duct.

Its subcellular location is the secreted. In terms of biological role, omega-conotoxins act at presynaptic membranes, they bind and block voltage-gated calcium channels (Cav). The protein is Omega-conotoxin-like 2/7 of Conus imperialis (Imperial cone).